The chain runs to 340 residues: UDP-N-acetylglucosamine--N-acetylmuramyl-(pentapeptide) pyrophosphoryl-undecaprenol N-acetylglucosamine transferase (340 aa).

UDP-N-acetyl-alpha-D-glucosamine contacts are provided by residues 15-17 (TGG), Asn-127, Ser-184, Ile-230, and Gln-275.

The protein belongs to the glycosyltransferase 28 family. MurG subfamily.

It is found in the cell inner membrane. It carries out the reaction di-trans,octa-cis-undecaprenyl diphospho-N-acetyl-alpha-D-muramoyl-L-alanyl-D-glutamyl-meso-2,6-diaminopimeloyl-D-alanyl-D-alanine + UDP-N-acetyl-alpha-D-glucosamine = di-trans,octa-cis-undecaprenyl diphospho-[N-acetyl-alpha-D-glucosaminyl-(1-&gt;4)]-N-acetyl-alpha-D-muramoyl-L-alanyl-D-glutamyl-meso-2,6-diaminopimeloyl-D-alanyl-D-alanine + UDP + H(+). Its pathway is cell wall biogenesis; peptidoglycan biosynthesis. Its function is as follows. Cell wall formation. Catalyzes the transfer of a GlcNAc subunit on undecaprenyl-pyrophosphoryl-MurNAc-pentapeptide (lipid intermediate I) to form undecaprenyl-pyrophosphoryl-MurNAc-(pentapeptide)GlcNAc (lipid intermediate II). This is UDP-N-acetylglucosamine--N-acetylmuramyl-(pentapeptide) pyrophosphoryl-undecaprenol N-acetylglucosamine transferase from Vesicomyosocius okutanii subsp. Calyptogena okutanii (strain HA).